We begin with the raw amino-acid sequence, 217 residues long: Probable transaldolase (217 aa).

K83 acts as the Schiff-base intermediate with substrate in catalysis.

Belongs to the transaldolase family. Type 3B subfamily.

The protein localises to the cytoplasm. It carries out the reaction D-sedoheptulose 7-phosphate + D-glyceraldehyde 3-phosphate = D-erythrose 4-phosphate + beta-D-fructose 6-phosphate. The protein operates within carbohydrate degradation; pentose phosphate pathway; D-glyceraldehyde 3-phosphate and beta-D-fructose 6-phosphate from D-ribose 5-phosphate and D-xylulose 5-phosphate (non-oxidative stage): step 2/3. In terms of biological role, transaldolase is important for the balance of metabolites in the pentose-phosphate pathway. This is Probable transaldolase from Maricaulis maris (strain MCS10) (Caulobacter maris).